A 543-amino-acid polypeptide reads, in one-letter code: Protein phosphatase 1G (543 aa).

G2 carries the N-myristoyl glycine lipid modification. Residue R22 is modified to Omega-N-methylarginine. Residues 26–503 (PYGFSAMQGW…DNMTCIIICF (478 aa)) form the PPM-type phosphatase domain. Residues D60 and G61 each coordinate Mn(2+). Disordered stretches follow at residues 116–139 (QIAG…DVDN) and 163–326 (NCHK…SDSG). T122 carries the phosphothreonine modification. Residues 123 to 139 (EDEDEKEKVADEDDVDN) show a composition bias toward acidic residues. A Phosphoserine modification is found at S183. The segment covering 259-310 (DSEDESDEAEEEEEDSEECSEEEDGYSSEEAENEEDEDDTEEAEEDDEEEEM) has biased composition (acidic residues). N6-acetyllysine is present on K381. The Mn(2+) site is built by D439 and D494. The interval 508 to 543 (TAAPQPESGKRKLEEVLSTEGAEENGNSDKKKAKRD) is disordered. A Phosphoserine modification is found at S525.

The protein belongs to the PP2C family. As to quaternary structure, interacts with NOL3; may dephosphorylate NOL3. Mg(2+) is required as a cofactor. Requires Mn(2+) as cofactor.

The protein resides in the cytoplasm. It is found in the membrane. It catalyses the reaction O-phospho-L-seryl-[protein] + H2O = L-seryl-[protein] + phosphate. The enzyme catalyses O-phospho-L-threonyl-[protein] + H2O = L-threonyl-[protein] + phosphate. This is Protein phosphatase 1G (PPM1G) from Bos taurus (Bovine).